The primary structure comprises 596 residues: Proteasome-associated ATPase (596 aa).

A coiled-coil region spans residues 12-94 (SRWERETQDL…KEEIDRLAQP (83 aa)). 280–285 (GCGKTL) contacts ATP. The segment at 595–596 (YL) is docks into pockets in the proteasome alpha-ring.

It belongs to the AAA ATPase family. In terms of assembly, homohexamer. Assembles into a hexameric ring structure that caps the 20S proteasome core. Strongly interacts with the prokaryotic ubiquitin-like protein Pup through a hydrophobic interface; the interacting region of ARC lies in its N-terminal coiled-coil domain. There is one Pup binding site per ARC hexamer ring. Upon ATP-binding, the C-terminus of ARC interacts with the alpha-rings of the proteasome core, possibly by binding to the intersubunit pockets.

The protein operates within protein degradation; proteasomal Pup-dependent pathway. ATPase which is responsible for recognizing, binding, unfolding and translocation of pupylated proteins into the bacterial 20S proteasome core particle. May be essential for opening the gate of the 20S proteasome via an interaction with its C-terminus, thereby allowing substrate entry and access to the site of proteolysis. Thus, the C-termini of the proteasomal ATPase may function like a 'key in a lock' to induce gate opening and therefore regulate proteolysis. This chain is Proteasome-associated ATPase, found in Stackebrandtia nassauensis (strain DSM 44728 / CIP 108903 / NRRL B-16338 / NBRC 102104 / LLR-40K-21).